The primary structure comprises 167 residues: MIGILNRWRQFGRRYFWPHLLLGMVAASFGLPQASAHDGTTLAETSARSLNIGSATRIDRLVMLQESARRSSFSVDYWHQHAIRTVIRHLSFSLTPSVSTVAATVPLEAHKLALLDTLNALLTHEARPPVIIRHTTQRQVSSSPRHHIGLWLAQVCGIRAGPPSALS.

Positions 1–36 (MIGILNRWRQFGRRYFWPHLLLGMVAASFGLPQASA) are cleaved as a signal peptide.

It belongs to the SecM family.

The protein localises to the cytoplasm. It is found in the cytosol. Its subcellular location is the periplasm. Regulates secA expression by translational coupling of the secM secA operon. Translational pausing at a specific Pro residue 5 residues before the end of the protein may allow disruption of a mRNA repressor helix that normally suppresses secA translation initiation. In Erwinia tasmaniensis (strain DSM 17950 / CFBP 7177 / CIP 109463 / NCPPB 4357 / Et1/99), this protein is Secretion monitor.